The sequence spans 309 residues: tRNA dimethylallyltransferase (309 aa).

10–17 (GPTAVGKT) contacts ATP. Residue 12 to 17 (TAVGKT) participates in substrate binding. Residues 35–38 (DSMQ) are interaction with substrate tRNA.

It belongs to the IPP transferase family. As to quaternary structure, monomer. It depends on Mg(2+) as a cofactor.

It carries out the reaction adenosine(37) in tRNA + dimethylallyl diphosphate = N(6)-dimethylallyladenosine(37) in tRNA + diphosphate. In terms of biological role, catalyzes the transfer of a dimethylallyl group onto the adenine at position 37 in tRNAs that read codons beginning with uridine, leading to the formation of N6-(dimethylallyl)adenosine (i(6)A). In Clostridium beijerinckii (strain ATCC 51743 / NCIMB 8052) (Clostridium acetobutylicum), this protein is tRNA dimethylallyltransferase.